Reading from the N-terminus, the 911-residue chain is Epithelial discoidin domain-containing receptor 1 (911 aa).

The first 19 residues, 1 to 19 (MGTGTLSSLLLLLLLVTIG), serve as a signal peptide directing secretion. Residues 22-415 (DMKGHFDPAK…VAKAEGSPTA (394 aa)) lie on the Extracellular side of the membrane. Positions 32–186 (CRYALGMQDR…VCLRVELYGC (155 aa)) constitute an F5/8 type C domain. 2 cysteine pairs are disulfide-bonded: Cys-32–Cys-186 and Cys-75–Cys-178. Residues 193 to 369 (LSYTAPVGQT…LFSEISFISD (177 aa)) form a DS-like domain region. Ca(2+) contacts are provided by Asn-213, Gln-232, Asp-235, Val-237, Tyr-255, and Tyr-257. Asn-213 carries N-linked (GlcNAc...) asparagine glycosylation. Asn-262 carries an N-linked (GlcNAc...) asparagine glycan. Residues Cys-305 and Cys-350 are joined by a disulfide bond. Positions 362 and 363 each coordinate Ca(2+). N-linked (GlcNAc...) asparagine glycans are attached at residues Asn-372 and Asn-392. The helical transmembrane segment at 416-436 (ILIGCLVAIILLLLLIIALML) threads the bilayer. The Cytoplasmic portion of the chain corresponds to 437 to 911 (WRLHWRRLLS…FLADDALNTV (475 aa)). The disordered stretch occupies residues 468–496 (ILINNRPGPREPPPYQEPRPRGTPPHSAP). Over residues 477–494 (REPPPYQEPRPRGTPPHS) the composition is skewed to pro residues. Positions 479–482 (PPPY) match the PPxY motif motif. A phosphotyrosine; by autocatalysis mark is found at Tyr-482, Tyr-511, and Tyr-518. The Protein kinase domain occupies 608–903 (LRFKEKLGEG…PPFAQLHRFL (296 aa)). ATP-binding positions include 614–622 (LGEGQFGEV) and Lys-653. Tyr-738 is modified (phosphotyrosine; by autocatalysis). The active-site Proton acceptor is the Asp-764. Phosphotyrosine; by autocatalysis is present on residues Tyr-790, Tyr-794, and Tyr-795.

Belongs to the protein kinase superfamily. Tyr protein kinase family. Insulin receptor subfamily. As to quaternary structure, homodimer. Interacts (via PPxY motif) with WWC1 (via WW domains) in a collagen-regulated manner. Forms a tripartite complex with WWC1 and PRKCZ, but predominantly in the absence of collagen. Interacts (tyrosine phosphorylated) with SHC1. Interacts with SRC. Interacts with MYH9. Interacts with CDH1. Interacts with PTPN11. Interacts with NCK2. Autophosphorylated in response to fibrillar collagen binding. In terms of tissue distribution, detected in the cochlea and the organ of Corti in the inner ear. Isoform 1 is predominant and is expressed in developing embryo and adult brain. Isoform 2 is expressed in various epithelial cells.

Its subcellular location is the cell membrane. The enzyme catalyses L-tyrosyl-[protein] + ATP = O-phospho-L-tyrosyl-[protein] + ADP + H(+). Tyrosine kinase that functions as a cell surface receptor for fibrillar collagen and regulates cell attachment to the extracellular matrix, remodeling of the extracellular matrix, cell migration, differentiation, survival and cell proliferation. Collagen binding triggers a signaling pathway that involves SRC and leads to the activation of MAP kinases. Regulates remodeling of the extracellular matrix by up-regulation of the matrix metalloproteinases MMP2, MMP7 and MMP9, and thereby facilitates cell migration and wound healing, but also tumor cell invasion. Promotes smooth muscle cell migration, and thereby contributes to arterial wound healing. Phosphorylates PTPN11. Required for normal blastocyst implantation during pregnancy, for normal mammary gland differentiation and normal lactation. Required for normal ear morphology and normal hearing. The protein is Epithelial discoidin domain-containing receptor 1 (Ddr1) of Mus musculus (Mouse).